The primary structure comprises 157 residues: Snaclec 3 (157 aa).

The signal sequence occupies residues 1-23 (MGRLIFLSFGWLVVFLSLSGTGA). 3 disulfides stabilise this stretch: C27-C38, C55-C153, and C128-C145. Positions 34 to 154 (YGQHCYRAFS…CAGHYPFICK (121 aa)) constitute a C-type lectin domain.

This sequence belongs to the snaclec family. In terms of assembly, heterodimer; disulfide-linked. As to expression, expressed by the venom gland.

It localises to the secreted. In terms of biological role, interferes with one step of hemostasis (modulation of platelet aggregation, or coagulation cascade, for example). This chain is Snaclec 3, found in Bitis gabonica (Gaboon adder).